We begin with the raw amino-acid sequence, 149 residues long: D-aminoacyl-tRNA deacylase (149 aa).

The short motif at Gly137 to Pro138 is the Gly-cisPro motif, important for rejection of L-amino acids element.

The protein belongs to the DTD family. As to quaternary structure, homodimer.

It localises to the cytoplasm. It catalyses the reaction glycyl-tRNA(Ala) + H2O = tRNA(Ala) + glycine + H(+). The enzyme catalyses a D-aminoacyl-tRNA + H2O = a tRNA + a D-alpha-amino acid + H(+). An aminoacyl-tRNA editing enzyme that deacylates mischarged D-aminoacyl-tRNAs. Also deacylates mischarged glycyl-tRNA(Ala), protecting cells against glycine mischarging by AlaRS. Acts via tRNA-based rather than protein-based catalysis; rejects L-amino acids rather than detecting D-amino acids in the active site. By recycling D-aminoacyl-tRNA to D-amino acids and free tRNA molecules, this enzyme counteracts the toxicity associated with the formation of D-aminoacyl-tRNA entities in vivo and helps enforce protein L-homochirality. This is D-aminoacyl-tRNA deacylase from Thermosipho africanus (strain TCF52B).